A 270-amino-acid polypeptide reads, in one-letter code: Dermonecrotic toxin LsaSicTox-alphaIB1av (270 aa).

Residue H2 is part of the active site. Mg(2+) is bound by residues E22 and D24. The Nucleophile role is filled by H38. 2 cysteine pairs are disulfide-bonded: C42–C48 and C44–C187. D82 provides a ligand contact to Mg(2+).

It belongs to the arthropod phospholipase D family. Class II subfamily. Requires Mg(2+) as cofactor. In terms of tissue distribution, expressed by the venom gland.

The protein resides in the secreted. The enzyme catalyses an N-(acyl)-sphingosylphosphocholine = an N-(acyl)-sphingosyl-1,3-cyclic phosphate + choline. The catalysed reaction is an N-(acyl)-sphingosylphosphoethanolamine = an N-(acyl)-sphingosyl-1,3-cyclic phosphate + ethanolamine. It catalyses the reaction a 1-acyl-sn-glycero-3-phosphocholine = a 1-acyl-sn-glycero-2,3-cyclic phosphate + choline. It carries out the reaction a 1-acyl-sn-glycero-3-phosphoethanolamine = a 1-acyl-sn-glycero-2,3-cyclic phosphate + ethanolamine. Dermonecrotic toxins cleave the phosphodiester linkage between the phosphate and headgroup of certain phospholipids (sphingolipid and lysolipid substrates), forming an alcohol (often choline) and a cyclic phosphate. This toxin acts on sphingomyelin (SM). It may also act on ceramide phosphoethanolamine (CPE), lysophosphatidylcholine (LPC) and lysophosphatidylethanolamine (LPE), but not on lysophosphatidylserine (LPS), and lysophosphatidylglycerol (LPG). It acts by transphosphatidylation, releasing exclusively cyclic phosphate products as second products. Induces dermonecrosis, hemolysis, increased vascular permeability, edema, inflammatory response, and platelet aggregation. This chain is Dermonecrotic toxin LsaSicTox-alphaIB1av, found in Loxosceles sabina (Tucson recluse spider).